Here is a 313-residue protein sequence, read N- to C-terminus: Ribonuclease HIII (313 aa).

The RNase H type-2 domain maps to 98–313 (YNCIGSDEAG…REKALKLIKK (216 aa)). The a divalent metal cation site is built by aspartate 104, glutamate 105, and aspartate 208.

This sequence belongs to the RNase HII family. RnhC subfamily. Mn(2+) serves as cofactor. Mg(2+) is required as a cofactor.

The protein localises to the cytoplasm. It carries out the reaction Endonucleolytic cleavage to 5'-phosphomonoester.. Functionally, endonuclease that specifically degrades the RNA of RNA-DNA hybrids. The chain is Ribonuclease HIII from Macrococcus caseolyticus (strain JCSC5402) (Macrococcoides caseolyticum).